The sequence spans 29 residues: Dermaseptin-9TR (29 aa).

As to expression, expressed by the skin glands.

The protein resides in the secreted. Functionally, has antimicrobial activity. The polypeptide is Dermaseptin-9TR (Phyllomedusa trinitatis (Trinidad leaf frog)).